Reading from the N-terminus, the 308-residue chain is Aspartate carbamoyltransferase catalytic subunit (308 aa).

Carbamoyl phosphate is bound by residues arginine 58 and threonine 59. Lysine 86 lines the L-aspartate pocket. Arginine 108, histidine 136, and glutamine 139 together coordinate carbamoyl phosphate. The L-aspartate site is built by arginine 169 and arginine 227. The carbamoyl phosphate site is built by glycine 268 and proline 269.

The protein belongs to the aspartate/ornithine carbamoyltransferase superfamily. ATCase family. Heterododecamer (2C3:3R2) of six catalytic PyrB chains organized as two trimers (C3), and six regulatory PyrI chains organized as three dimers (R2).

It carries out the reaction carbamoyl phosphate + L-aspartate = N-carbamoyl-L-aspartate + phosphate + H(+). It functions in the pathway pyrimidine metabolism; UMP biosynthesis via de novo pathway; (S)-dihydroorotate from bicarbonate: step 2/3. Its function is as follows. Catalyzes the condensation of carbamoyl phosphate and aspartate to form carbamoyl aspartate and inorganic phosphate, the committed step in the de novo pyrimidine nucleotide biosynthesis pathway. This is Aspartate carbamoyltransferase catalytic subunit from Chloroflexus aggregans (strain MD-66 / DSM 9485).